The sequence spans 360 residues: Isopentenyl-diphosphate delta-isomerase (360 aa).

Substrate is bound at residue 12–13 (RK). Residues S70, 71 to 73 (SMT), S101, and N130 each bind FMN. Residue 101 to 103 (SMR) coordinates substrate. Residue Q165 coordinates substrate. E166 is a Mg(2+) binding site. FMN-binding positions include K197, 288-290 (GIR), and 309-310 (AG).

The protein belongs to the IPP isomerase type 2 family. Homooctamer. Dimer of tetramers. It depends on FMN as a cofactor. Requires NADPH as cofactor. Mg(2+) is required as a cofactor.

The protein localises to the cytoplasm. It carries out the reaction isopentenyl diphosphate = dimethylallyl diphosphate. Involved in the biosynthesis of isoprenoids. Catalyzes the 1,3-allylic rearrangement of the homoallylic substrate isopentenyl (IPP) to its allylic isomer, dimethylallyl diphosphate (DMAPP). This chain is Isopentenyl-diphosphate delta-isomerase, found in Chlorobium limicola (strain DSM 245 / NBRC 103803 / 6330).